Reading from the N-terminus, the 354-residue chain is Photosystem II D2 protein (354 aa).

Thr2 is subject to N-acetylthreonine. Thr2 is modified (phosphothreonine). A helical transmembrane segment spans residues 42–62 (CAYFALGGWFTGTTFVTSWYT). Residue His119 coordinates chlorophyll a. The helical transmembrane segment at 126–142 (GFMLRQFELARSVQLRP) threads the bilayer. Residues Gln131 and Asn144 each coordinate pheophytin a. Residues 154–167 (VFVSVFLIYPLGQS) traverse the membrane as a helical segment. His199 is a binding site for chlorophyll a. Residues 209–229 (AALLCAIHGATVENTLFEDGD) traverse the membrane as a helical segment. A plastoquinone contacts are provided by His216 and Phe263. Fe cation is bound at residue His216. His270 contacts Fe cation. Residues 280 to 296 (GLWMSALGVVGLALNLR) form a helical membrane-spanning segment.

Belongs to the reaction center PufL/M/PsbA/D family. In terms of assembly, PSII is composed of 1 copy each of membrane proteins PsbA, PsbB, PsbC, PsbD, PsbE, PsbF, PsbH, PsbI, PsbJ, PsbK, PsbL, PsbM, PsbT, PsbX, PsbY, PsbZ, Psb30/Ycf12, at least 3 peripheral proteins of the oxygen-evolving complex and a large number of cofactors. It forms dimeric complexes. The cofactor is The D1/D2 heterodimer binds P680, chlorophylls that are the primary electron donor of PSII, and subsequent electron acceptors. It shares a non-heme iron and each subunit binds pheophytin, quinone, additional chlorophylls, carotenoids and lipids. There is also a Cl(-1) ion associated with D1 and D2, which is required for oxygen evolution. The PSII complex binds additional chlorophylls, carotenoids and specific lipids..

It localises to the plastid. The protein localises to the chloroplast thylakoid membrane. The catalysed reaction is 2 a plastoquinone + 4 hnu + 2 H2O = 2 a plastoquinol + O2. Functionally, photosystem II (PSII) is a light-driven water:plastoquinone oxidoreductase that uses light energy to abstract electrons from H(2)O, generating O(2) and a proton gradient subsequently used for ATP formation. It consists of a core antenna complex that captures photons, and an electron transfer chain that converts photonic excitation into a charge separation. The D1/D2 (PsbA/PsbD) reaction center heterodimer binds P680, the primary electron donor of PSII as well as several subsequent electron acceptors. D2 is needed for assembly of a stable PSII complex. The polypeptide is Photosystem II D2 protein (Piper cenocladum (Ant piper)).